The following is a 310-amino-acid chain: MPVLAVDKPLNLTSHDVVNRARRARGTRRVGHTGTLDPLATGVLVLCVDDSTKVVQFMEHDSKDYLAWVSLGAGTPTLDAEGPVDATAPVPPLDEDHIRGMLTTFCGPQQQIPPQYSAIQLGGQRAYAVARAGGTLELPARNIVIHSLDLLRVYPSVQAAPRMFSATPEGWSPDPQGQAFSLPEPLGEFPTLLLRASVGSGTYLRSLARDLGAALGVPAHLAGLVRTRVGRYDLSGAVSLEDLAEAPGIPDLEALDFPRIQASERLALELRQGKRPRHTAQGRHVVTLEGQLVAVVDGDGEQLKVVRAWA.

Aspartate 37 acts as the Nucleophile in catalysis.

It belongs to the pseudouridine synthase TruB family. Type 1 subfamily.

It carries out the reaction uridine(55) in tRNA = pseudouridine(55) in tRNA. In terms of biological role, responsible for synthesis of pseudouridine from uracil-55 in the psi GC loop of transfer RNAs. The chain is tRNA pseudouridine synthase B from Deinococcus deserti (strain DSM 17065 / CIP 109153 / LMG 22923 / VCD115).